Here is a 332-residue protein sequence, read N- to C-terminus: Tetraacyldisaccharide 4'-kinase (332 aa).

60–67 (TVGGTGKT) contacts ATP.

It belongs to the LpxK family.

It carries out the reaction a lipid A disaccharide + ATP = a lipid IVA + ADP + H(+). It functions in the pathway glycolipid biosynthesis; lipid IV(A) biosynthesis; lipid IV(A) from (3R)-3-hydroxytetradecanoyl-[acyl-carrier-protein] and UDP-N-acetyl-alpha-D-glucosamine: step 6/6. Its function is as follows. Transfers the gamma-phosphate of ATP to the 4'-position of a tetraacyldisaccharide 1-phosphate intermediate (termed DS-1-P) to form tetraacyldisaccharide 1,4'-bis-phosphate (lipid IVA). In Pseudomonas aeruginosa (strain LESB58), this protein is Tetraacyldisaccharide 4'-kinase.